The following is a 159-amino-acid chain: Ribosomal RNA large subunit methyltransferase H (159 aa).

S-adenosyl-L-methionine-binding positions include Leu-76, Gly-108, and 127–132 (FSKMTF).

This sequence belongs to the RNA methyltransferase RlmH family. Homodimer.

It localises to the cytoplasm. The enzyme catalyses pseudouridine(1915) in 23S rRNA + S-adenosyl-L-methionine = N(3)-methylpseudouridine(1915) in 23S rRNA + S-adenosyl-L-homocysteine + H(+). Functionally, specifically methylates the pseudouridine at position 1915 (m3Psi1915) in 23S rRNA. The polypeptide is Ribosomal RNA large subunit methyltransferase H (Bifidobacterium adolescentis (strain ATCC 15703 / DSM 20083 / NCTC 11814 / E194a)).